The sequence spans 393 residues: Bifunctional enzyme Fae/Hps (393 aa).

The tract at residues 1–161 (MYLVGEALIG…YEKDRAAHGI (161 aa)) is formaldehyde-activating enzyme. His17 (proton donor) is an active-site residue. The substrate site is built by Asp19, Leu48, Lys66, Thr68, and Gln83. Residues 162 to 393 (MGFKVQRLWD…IDQFRIMTDF (232 aa)) are 3-hexulose-6-phosphate synthase.

The protein in the N-terminal section; belongs to the formaldehyde-activating enzyme family. This sequence in the C-terminal section; belongs to the HPS/KGPDC family. HPS subfamily.

The catalysed reaction is 5,6,7,8-tetrahydromethanopterin + formaldehyde = 5,10-methylenetetrahydromethanopterin + H2O. The enzyme catalyses D-ribulose 5-phosphate + formaldehyde = D-arabino-hex-3-ulose 6-phosphate. Its pathway is carbohydrate biosynthesis; D-ribose 5-phosphate biosynthesis. Its function is as follows. Catalyzes the condensation of formaldehyde with tetrahydromethanopterin (H(4)MPT) to 5,10-methylenetetrahydromethanopterin. Catalyzes the reversible formation of ribulose-5-phosphate and formaldehyde from 3-hexulose-6-phosphate. The polypeptide is Bifunctional enzyme Fae/Hps (Methanoregula boonei (strain DSM 21154 / JCM 14090 / 6A8)).